The primary structure comprises 133 residues: Small ribosomal subunit protein uS11 (133 aa).

It belongs to the universal ribosomal protein uS11 family. Part of the 30S ribosomal subunit. Interacts with proteins S7 and S18. Binds to IF-3.

Its function is as follows. Located on the platform of the 30S subunit, it bridges several disparate RNA helices of the 16S rRNA. Forms part of the Shine-Dalgarno cleft in the 70S ribosome. In Ralstonia pickettii (strain 12J), this protein is Small ribosomal subunit protein uS11.